The sequence spans 536 residues: Light-independent protochlorophyllide reductase subunit B (536 aa).

Aspartate 36 contributes to the [4Fe-4S] cluster binding site. The active-site Proton donor is the aspartate 274. 409–410 contacts substrate; sequence GL. Residues 426–448 form a disordered region; it reads DEAGPSHHGGKAVPASAPRADEA.

This sequence belongs to the ChlB/BchB/BchZ family. In terms of assembly, protochlorophyllide reductase is composed of three subunits; BchL, BchN and BchB. Forms a heterotetramer of two BchB and two BchN subunits. Requires [4Fe-4S] cluster as cofactor.

It carries out the reaction chlorophyllide a + oxidized 2[4Fe-4S]-[ferredoxin] + 2 ADP + 2 phosphate = protochlorophyllide a + reduced 2[4Fe-4S]-[ferredoxin] + 2 ATP + 2 H2O. It functions in the pathway porphyrin-containing compound metabolism; bacteriochlorophyll biosynthesis (light-independent). Its function is as follows. Component of the dark-operative protochlorophyllide reductase (DPOR) that uses Mg-ATP and reduced ferredoxin to reduce ring D of protochlorophyllide (Pchlide) to form chlorophyllide a (Chlide). This reaction is light-independent. The NB-protein (BchN-BchB) is the catalytic component of the complex. This is Light-independent protochlorophyllide reductase subunit B from Cereibacter sphaeroides (strain KD131 / KCTC 12085) (Rhodobacter sphaeroides).